Consider the following 761-residue polypeptide: Elongation factor G, mitochondrial (761 aa).

The transit peptide at 1–42 (MSVQKMMWVPRKMVGGRIPFFTCSKVFSGFSRRSFHESPLAR) directs the protein to the mitochondrion. The tr-type G domain occupies 68-349 (NKLRNIGISA…AIVDYLPNPS (282 aa)). GTP-binding positions include 77–84 (AHIDSGKT), 148–152 (DTPGH), and 202–205 (NKMD).

It belongs to the TRAFAC class translation factor GTPase superfamily. Classic translation factor GTPase family. EF-G/EF-2 subfamily. In terms of processing, the precursor is processed in two steps involving mitochondrial intermediate peptidase (MIP) and mitochondrial processing peptidase (MPP).

The protein localises to the mitochondrion. It participates in protein biosynthesis; polypeptide chain elongation. In terms of biological role, mitochondrial GTPase that catalyzes the GTP-dependent ribosomal translocation step during translation elongation. During this step, the ribosome changes from the pre-translocational (PRE) to the post-translocational (POST) state as the newly formed A-site-bound peptidyl-tRNA and P-site-bound deacylated tRNA move to the P and E sites, respectively. Catalyzes the coordinated movement of the two tRNA molecules, the mRNA and conformational changes in the ribosome. This chain is Elongation factor G, mitochondrial, found in Saccharomyces cerevisiae (strain ATCC 204508 / S288c) (Baker's yeast).